The chain runs to 485 residues: E-selectin (485 aa).

The N-terminal stretch at 1-22 (MIVSQYLSALTFVLLLFKESRT) is a signal peptide. Positions 23–140 (WSYHASTEMM…CTKQKLALCY (118 aa)) constitute a C-type lectin domain. At 23-430 (WSYHASTEMM…CEAPTVSQTP (408 aa)) the chain is on the extracellular side. Cystine bridges form between Cys-41–Cys-139, Cys-112–Cys-131, Cys-144–Cys-155, Cys-149–Cys-164, Cys-166–Cys-175, Cys-181–Cys-224, Cys-194–Cys-206, Cys-210–Cys-237, Cys-242–Cys-286, Cys-255–Cys-268, Cys-272–Cys-299, Cys-304–Cys-349, Cys-335–Cys-362, Cys-367–Cys-408, and Cys-394–Cys-421. Asn-61, Asn-79, and Asn-88 each carry an N-linked (GlcNAc...) asparagine glycan. Positions 102, 104, and 110 each coordinate Ca(2+). Residues 102 to 110 (EPNNKQSDE), 114 to 119 (EIYIKR), and 127 to 129 (NDE) contribute to the a carbohydrate site. The Ca(2+) site is built by Asn-127 and Asp-128. Residues 141–176 (KAACNPTPCGSHGECVETINNYTCQCHPGFKGLKCE) form the EGF-like domain. Asn-161 carries an N-linked (GlcNAc...) asparagine glycan. Sushi domains lie at 179 to 239 (VTCP…KCNV), 240 to 301 (VKCD…TCKA), 302 to 364 (VSCA…VCEV), and 365 to 423 (VRCS…TCEA). A glycan (N-linked (GlcNAc...) asparagine) is linked at Asn-203. Residue Asn-265 is glycosylated (N-linked (GlcNAc...) asparagine). Residues Asn-312 and Asn-316 are each glycosylated (N-linked (GlcNAc...) asparagine). Asn-379 and Asn-401 each carry an N-linked (GlcNAc...) asparagine glycan. The chain crosses the membrane as a helical span at residues 431–453 (LAVGLSTAGVSLVTIPSFLFWLL). The Cytoplasmic portion of the chain corresponds to 454–485 (KRLQKKAKKFSPASSCSSLKSNGCYSTPSKLI). A disordered region spans residues 466–485 (ASSCSSLKSNGCYSTPSKLI).

This sequence belongs to the selectin/LECAM family. In terms of assembly, interacts with SELPLG/PSGL1 and PODXL2 through the sialyl Lewis X epitope. SELPLG sulfation appears not to be required for this interaction.

The protein localises to the cell membrane. Functionally, cell-surface glycoprotein having a role in immunoadhesion. Mediates in the adhesion of blood neutrophils in cytokine-activated endothelium through interaction with SELPLG/PSGL1. May have a role in capillary morphogenesis. The sequence is that of E-selectin (SELE) from Bos taurus (Bovine).